A 119-amino-acid chain; its full sequence is NAD(P)H-quinone oxidoreductase subunit M (119 aa).

It belongs to the complex I NdhM subunit family. NDH-1 can be composed of about 15 different subunits; different subcomplexes with different compositions have been identified which probably have different functions.

The protein resides in the cellular thylakoid membrane. It catalyses the reaction a plastoquinone + NADH + (n+1) H(+)(in) = a plastoquinol + NAD(+) + n H(+)(out). It carries out the reaction a plastoquinone + NADPH + (n+1) H(+)(in) = a plastoquinol + NADP(+) + n H(+)(out). In terms of biological role, NDH-1 shuttles electrons from an unknown electron donor, via FMN and iron-sulfur (Fe-S) centers, to quinones in the respiratory and/or the photosynthetic chain. The immediate electron acceptor for the enzyme in this species is believed to be plastoquinone. Couples the redox reaction to proton translocation, and thus conserves the redox energy in a proton gradient. Cyanobacterial NDH-1 also plays a role in inorganic carbon-concentration. The polypeptide is NAD(P)H-quinone oxidoreductase subunit M (Crocosphaera subtropica (strain ATCC 51142 / BH68) (Cyanothece sp. (strain ATCC 51142))).